Reading from the N-terminus, the 146-residue chain is Large ribosomal subunit protein uL15 (146 aa).

A disordered region spans residues 1-58; that stretch reads MNLSNLRAPKKANRNRKRVGRGMGSGHGKTSTRGHKGQRSRSGSRSMRGFEGGQMPLH. Basic residues-rich tracts occupy residues 8–20 and 30–39; these read APKK…KRVG and TSTRGHKGQR. Residues 40 to 49 show a composition bias toward low complexity; sequence SRSGSRSMRG.

Belongs to the universal ribosomal protein uL15 family. Part of the 50S ribosomal subunit.

Binds to the 23S rRNA. This chain is Large ribosomal subunit protein uL15, found in Acidobacterium capsulatum (strain ATCC 51196 / DSM 11244 / BCRC 80197 / JCM 7670 / NBRC 15755 / NCIMB 13165 / 161).